The primary structure comprises 183 residues: uncharacterized protein (183 aa).

The tract at residues 1–36 is disordered; it reads MAKRGNKKKQEAPLSLGKHTVGGRVGKPTNAKTGSA. The 75-residue stretch at 100-174 folds into the RRM domain; the sequence is TNVVIENLAP…FKLSCYIKKN (75 aa).

The protein resides in the nucleus. The protein localises to the nucleolus. This is an uncharacterized protein from Schizosaccharomyces pombe (strain 972 / ATCC 24843) (Fission yeast).